Reading from the N-terminus, the 287-residue chain is Phosphatidylserine decarboxylase proenzyme (287 aa).

Active-site charge relay system; for autoendoproteolytic cleavage activity residues include aspartate 89, histidine 146, and serine 252. Serine 252 serves as the catalytic Schiff-base intermediate with substrate; via pyruvic acid; for decarboxylase activity. The residue at position 252 (serine 252) is a Pyruvic acid (Ser); by autocatalysis.

Belongs to the phosphatidylserine decarboxylase family. PSD-B subfamily. Prokaryotic type I sub-subfamily. In terms of assembly, heterodimer of a large membrane-associated beta subunit and a small pyruvoyl-containing alpha subunit. Pyruvate is required as a cofactor. Post-translationally, is synthesized initially as an inactive proenzyme. Formation of the active enzyme involves a self-maturation process in which the active site pyruvoyl group is generated from an internal serine residue via an autocatalytic post-translational modification. Two non-identical subunits are generated from the proenzyme in this reaction, and the pyruvate is formed at the N-terminus of the alpha chain, which is derived from the carboxyl end of the proenzyme. The autoendoproteolytic cleavage occurs by a canonical serine protease mechanism, in which the side chain hydroxyl group of the serine supplies its oxygen atom to form the C-terminus of the beta chain, while the remainder of the serine residue undergoes an oxidative deamination to produce ammonia and the pyruvoyl prosthetic group on the alpha chain. During this reaction, the Ser that is part of the protease active site of the proenzyme becomes the pyruvoyl prosthetic group, which constitutes an essential element of the active site of the mature decarboxylase.

The protein resides in the cell membrane. The enzyme catalyses a 1,2-diacyl-sn-glycero-3-phospho-L-serine + H(+) = a 1,2-diacyl-sn-glycero-3-phosphoethanolamine + CO2. It functions in the pathway phospholipid metabolism; phosphatidylethanolamine biosynthesis; phosphatidylethanolamine from CDP-diacylglycerol: step 2/2. Catalyzes the formation of phosphatidylethanolamine (PtdEtn) from phosphatidylserine (PtdSer). The sequence is that of Phosphatidylserine decarboxylase proenzyme from Shewanella halifaxensis (strain HAW-EB4).